The sequence spans 115 residues: Ig heavy chain V region PJ14 (115 aa).

Residues 1 to 19 form the signal peptide; sequence MAVLALLFCLVTFPSCILS. The Ig-like domain maps to 20–115; sequence QVQLKESGPG…TDDTARYYCA (96 aa).

The protein is Ig heavy chain V region PJ14 of Mus musculus (Mouse).